Reading from the N-terminus, the 310-residue chain is Aspartate carbamoyltransferase catalytic subunit (310 aa).

Arg60 and Thr61 together coordinate carbamoyl phosphate. Lys88 provides a ligand contact to L-aspartate. Residues Arg110, His138, and Gln141 each coordinate carbamoyl phosphate. L-aspartate contacts are provided by Arg171 and Arg225. Residues Gly266 and Pro267 each contribute to the carbamoyl phosphate site.

It belongs to the aspartate/ornithine carbamoyltransferase superfamily. ATCase family. In terms of assembly, heterododecamer (2C3:3R2) of six catalytic PyrB chains organized as two trimers (C3), and six regulatory PyrI chains organized as three dimers (R2).

It catalyses the reaction carbamoyl phosphate + L-aspartate = N-carbamoyl-L-aspartate + phosphate + H(+). It participates in pyrimidine metabolism; UMP biosynthesis via de novo pathway; (S)-dihydroorotate from bicarbonate: step 2/3. In terms of biological role, catalyzes the condensation of carbamoyl phosphate and aspartate to form carbamoyl aspartate and inorganic phosphate, the committed step in the de novo pyrimidine nucleotide biosynthesis pathway. The sequence is that of Aspartate carbamoyltransferase catalytic subunit from Christiangramia forsetii (strain DSM 17595 / CGMCC 1.15422 / KT0803) (Gramella forsetii).